A 370-amino-acid chain; its full sequence is tRNA-specific 2-thiouridylase MnmA (370 aa).

ATP-binding positions include 7–14 (ALSGGVDS) and Met-34. The segment at 104-106 (NPD) is interaction with target base in tRNA. Cys-109 serves as the catalytic Nucleophile. The cysteines at positions 109 and 202 are disulfide-linked. An ATP-binding site is contributed by Gly-134. Residues 152-154 (KDQ) form an interaction with tRNA region. The Cysteine persulfide intermediate role is filled by Cys-202. The segment at 308–309 (RY) is interaction with tRNA.

Belongs to the MnmA/TRMU family.

Its subcellular location is the cytoplasm. It catalyses the reaction S-sulfanyl-L-cysteinyl-[protein] + uridine(34) in tRNA + AH2 + ATP = 2-thiouridine(34) in tRNA + L-cysteinyl-[protein] + A + AMP + diphosphate + H(+). Catalyzes the 2-thiolation of uridine at the wobble position (U34) of tRNA, leading to the formation of s(2)U34. This is tRNA-specific 2-thiouridylase MnmA from Mycoplasma mobile (strain ATCC 43663 / 163K / NCTC 11711) (Mesomycoplasma mobile).